Consider the following 263-residue polypeptide: Purine nucleoside phosphorylase SERP0752 (263 aa).

Zn(2+) is bound by residues H79, C124, and H141.

The protein belongs to the purine nucleoside phosphorylase YfiH/LACC1 family. In terms of assembly, homodimer. Cu(2+) serves as cofactor. Zn(2+) is required as a cofactor.

It carries out the reaction adenosine + phosphate = alpha-D-ribose 1-phosphate + adenine. It catalyses the reaction S-methyl-5'-thioadenosine + phosphate = 5-(methylsulfanyl)-alpha-D-ribose 1-phosphate + adenine. The enzyme catalyses inosine + phosphate = alpha-D-ribose 1-phosphate + hypoxanthine. The catalysed reaction is adenosine + H2O + H(+) = inosine + NH4(+). Purine nucleoside enzyme that catalyzes the phosphorolysis of adenosine and inosine nucleosides, yielding D-ribose 1-phosphate and the respective free bases, adenine and hypoxanthine. Also catalyzes the phosphorolysis of S-methyl-5'-thioadenosine into adenine and S-methyl-5-thio-alpha-D-ribose 1-phosphate. Also has adenosine deaminase activity. The polypeptide is Purine nucleoside phosphorylase SERP0752 (Staphylococcus epidermidis (strain ATCC 35984 / DSM 28319 / BCRC 17069 / CCUG 31568 / BM 3577 / RP62A)).